Reading from the N-terminus, the 330-residue chain is Aspartate--ammonia ligase (330 aa).

This sequence belongs to the class-II aminoacyl-tRNA synthetase family. AsnA subfamily.

It localises to the cytoplasm. The catalysed reaction is L-aspartate + NH4(+) + ATP = L-asparagine + AMP + diphosphate + H(+). It participates in amino-acid biosynthesis; L-asparagine biosynthesis; L-asparagine from L-aspartate (ammonia route): step 1/1. The polypeptide is Aspartate--ammonia ligase (Streptococcus agalactiae serotype III (strain NEM316)).